Reading from the N-terminus, the 158-residue chain is Retinoic acid receptor beta (158 aa).

Positions 1-18 are enriched in low complexity; sequence RHSAQSIETQSTSSEELV. The tract at residues 1-24 is disordered; that stretch reads RHSAQSIETQSTSSEELVPSPPSP. A DNA-binding region (nuclear receptor) is located at residues 31 to 106; that stretch reads YKPCFVCQDK…VGMSKESVRN (76 aa). 2 NR C4-type zinc fingers span residues 34–54 and 70–94; these read CFVC…CEGC and CHRD…LQRC. The 30-residue stretch at 129–158 folds into the NR LBD domain; the sequence is ELDDLTEKIRKAHQETFPSLCQLGKYTTNS.

The protein belongs to the nuclear hormone receptor family. NR1 subfamily. Heterodimer; with a RXR molecule. Binds DNA preferentially as a RAR/RXR heterodimer.

The protein localises to the nucleus. Receptor for retinoic acid. Retinoic acid receptors bind as heterodimers to their target response elements in response to their ligands, all-trans or 9-cis retinoic acid, and regulate gene expression in various biological processes. The RAR/RXR heterodimers bind to the retinoic acid response elements (RARE) composed of tandem 5'-AGGTCA-3' sites known as DR1-DR5. The protein is Retinoic acid receptor beta (RARB) of Notophthalmus viridescens (Eastern newt).